Here is an 88-residue protein sequence, read N- to C-terminus: U13-theraphotoxin-Cg1a (88 aa).

A signal peptide spans 1–21 (MKVSVLITLAVLGVMFVWASA). A propeptide spanning residues 22–52 (AELEQSGSDQKDSDSPAWLKSMERIFQSEER) is cleaved from the precursor. 3 cysteine pairs are disulfide-bonded: cysteine 54–cysteine 68, cysteine 61–cysteine 73, and cysteine 67–cysteine 80.

The protein belongs to the neurotoxin 10 (Hwtx-1) family. 41 (Jztx-36) subfamily. In terms of tissue distribution, expressed by the venom gland.

It localises to the secreted. In terms of biological role, probable ion channel inhibitor. This chain is U13-theraphotoxin-Cg1a, found in Chilobrachys guangxiensis (Chinese earth tiger tarantula).